The primary structure comprises 172 residues: uncharacterized protein (172 aa).

This is an uncharacterized protein from Macaca mulatta (Rhesus macaque).